Here is a 354-residue protein sequence, read N- to C-terminus: Uroporphyrinogen decarboxylase (354 aa).

Substrate is bound by residues 27–31 (RQAGR), F46, D77, Y154, T209, and H327.

This sequence belongs to the uroporphyrinogen decarboxylase family. Homodimer.

It localises to the cytoplasm. It carries out the reaction uroporphyrinogen III + 4 H(+) = coproporphyrinogen III + 4 CO2. The protein operates within porphyrin-containing compound metabolism; protoporphyrin-IX biosynthesis; coproporphyrinogen-III from 5-aminolevulinate: step 4/4. Functionally, catalyzes the decarboxylation of four acetate groups of uroporphyrinogen-III to yield coproporphyrinogen-III. This is Uroporphyrinogen decarboxylase from Salmonella typhi.